The chain runs to 93 residues: Acylphosphatase (93 aa).

Positions R7 to R93 constitute an Acylphosphatase-like domain. Residues R22 and N40 contribute to the active site.

The protein belongs to the acylphosphatase family.

The enzyme catalyses an acyl phosphate + H2O = a carboxylate + phosphate + H(+). In Haloquadratum walsbyi (strain DSM 16790 / HBSQ001), this protein is Acylphosphatase (acyP).